The following is a 181-amino-acid chain: Crossover junction endodeoxyribonuclease RuvC (181 aa).

Residues Asp-7, Glu-67, and Asp-139 contribute to the active site. Residues Asp-7, Glu-67, and Asp-139 each coordinate Mg(2+).

This sequence belongs to the RuvC family. Homodimer which binds Holliday junction (HJ) DNA. The HJ becomes 2-fold symmetrical on binding to RuvC with unstacked arms; it has a different conformation from HJ DNA in complex with RuvA. In the full resolvosome a probable DNA-RuvA(4)-RuvB(12)-RuvC(2) complex forms which resolves the HJ. Mg(2+) is required as a cofactor.

Its subcellular location is the cytoplasm. The catalysed reaction is Endonucleolytic cleavage at a junction such as a reciprocal single-stranded crossover between two homologous DNA duplexes (Holliday junction).. The RuvA-RuvB-RuvC complex processes Holliday junction (HJ) DNA during genetic recombination and DNA repair. Endonuclease that resolves HJ intermediates. Cleaves cruciform DNA by making single-stranded nicks across the HJ at symmetrical positions within the homologous arms, yielding a 5'-phosphate and a 3'-hydroxyl group; requires a central core of homology in the junction. The consensus cleavage sequence is 5'-(A/T)TT(C/G)-3'. Cleavage occurs on the 3'-side of the TT dinucleotide at the point of strand exchange. HJ branch migration catalyzed by RuvA-RuvB allows RuvC to scan DNA until it finds its consensus sequence, where it cleaves and resolves the cruciform DNA. This chain is Crossover junction endodeoxyribonuclease RuvC, found in Cupriavidus necator (strain ATCC 17699 / DSM 428 / KCTC 22496 / NCIMB 10442 / H16 / Stanier 337) (Ralstonia eutropha).